Here is a 349-residue protein sequence, read N- to C-terminus: Beta-hexosaminidase (349 aa).

Substrate is bound by residues Asp-64, Arg-72, Arg-138, and 168–169; that span reads KH. His-181 (proton donor/acceptor) is an active-site residue. The active-site Nucleophile is the Asp-252.

It belongs to the glycosyl hydrolase 3 family. NagZ subfamily.

The protein resides in the cytoplasm. It catalyses the reaction Hydrolysis of terminal non-reducing N-acetyl-D-hexosamine residues in N-acetyl-beta-D-hexosaminides.. It participates in cell wall biogenesis; peptidoglycan recycling. Its function is as follows. Plays a role in peptidoglycan recycling by cleaving the terminal beta-1,4-linked N-acetylglucosamine (GlcNAc) from peptide-linked peptidoglycan fragments, giving rise to free GlcNAc, anhydro-N-acetylmuramic acid and anhydro-N-acetylmuramic acid-linked peptides. The polypeptide is Beta-hexosaminidase (Methylobacillus flagellatus (strain ATCC 51484 / DSM 6875 / VKM B-1610 / KT)).